A 470-amino-acid chain; its full sequence is 24-hydroxycholesterol 7-alpha-hydroxylase (470 aa).

Helical transmembrane passes span 3–23 (IMEL…LFLF) and 270–290 (VVLW…LGYI). Cys415 contributes to the heme binding site.

Belongs to the cytochrome P450 family. It depends on heme as a cofactor. In terms of tissue distribution, liver specific. Hepatic expression is sexually dimorphic (female &gt; male).

The protein localises to the endoplasmic reticulum membrane. It localises to the microsome membrane. The catalysed reaction is (24S)-hydroxycholesterol + reduced [NADPH--hemoprotein reductase] + O2 = (24S)-7alpha-dihydroxycholesterol + oxidized [NADPH--hemoprotein reductase] + H2O + H(+). It participates in steroid metabolism; cholesterol degradation. Its pathway is lipid metabolism; bile acid biosynthesis. Functionally, a cytochrome P450 monooxygenase involved in neural cholesterol clearance through bile acid synthesis. Catalyzes 7-alpha hydroxylation of (24S)-hydroxycholesterol, a neural oxysterol that is metabolized to bile acids in the liver. Mechanistically, uses molecular oxygen inserting one oxygen atom into a substrate, and reducing the second into a water molecule, with two electrons provided by NADPH via cytochrome P450 reductase (CPR; NADPH-ferrihemoprotein reductase). In Mus musculus (Mouse), this protein is 24-hydroxycholesterol 7-alpha-hydroxylase (Cyp39a1).